A 72-amino-acid chain; its full sequence is MKNSESLKEFKKLNSAQITEKIDQLRKDLFDLRFKQATRQLNETHKFKTIKKQVAQLLTLSKSQSASQTTSE.

Belongs to the universal ribosomal protein uL29 family.

The protein is Large ribosomal subunit protein uL29 of Prochlorococcus marinus (strain MIT 9312).